The following is a 365-amino-acid chain: PHD finger protein 6 (365 aa).

Ser2 carries the N-acetylserine modification. Short sequence motifs (nuclear localization signal) lie at residues 13–16 and 129–133; these read RQRK and RKHKK. The C2HC pre-PHD-type 1 zinc-finger motif lies at 14–52; that stretch reads QRKCGFCKSNRDKECGQLLISENQKVAAHHKCMLFSSAL. The interval 14 to 132 is extended PHD1 domain (ePHD1); that stretch reads QRKCGFCKSN…IYMVYCRKHK (119 aa). Residues 80 to 132 form a PHD-type 1 zinc finger; it reads LMCSLCHCPGATIGCDVKTCHRTYHYHCALHDKAQIREKPSQGIYMVYCRKHK. Phosphoserine is present on residues Ser138, Ser145, and Ser155. The segment at 139-211 is disordered; it reads EADLEESFNE…RSSPSDTRPK (73 aa). The short motif at 157–169 is the Nucleolar localization signal element; the sequence is KSKKKSRKGRPRK. Over residues 157–171 the composition is skewed to basic residues; that stretch reads KSKKKSRKGRPRKTN. Residue Lys173 forms a Glycyl lysine isopeptide (Lys-Gly) (interchain with G-Cter in SUMO2) linkage. Ser183 and Ser199 each carry phosphoserine. A C2HC pre-PHD-type 2 zinc finger spans residues 209 to 249; the sequence is RPKCGFCHVGEEENQARGKLHIFNAKKAAAHYKCMLFSSGT. Residues 209–330 are extended PHD2 domain (ePHD2); sequence RPKCGFCHVG…IYKLYCKNHS (122 aa). Lys227 participates in a covalent cross-link: Glycyl lysine isopeptide (Lys-Gly) (interchain with G-Cter in SUMO2). The segment at 278–330 adopts a PHD-type 2 zinc-finger fold; it reads MKCTLCSQPGATIGCEIKACVKTYHYHCGVQDKAKYIENMSRGIYKLYCKNHS. The disordered stretch occupies residues 330 to 365; sequence SGNDERDEEDEERESKSRGKVEIDQQQLTQQQLNGN. Positions 342–352 are enriched in basic and acidic residues; it reads RESKSRGKVEI. Residues 354 to 365 are compositionally biased toward low complexity; that stretch reads QQQLTQQQLNGN. Thr358 carries the post-translational modification Phosphothreonine.

As to quaternary structure, interacts with UBTF. Interacts with the NuRD complex component RBBP4 (via the nucleolar localization motif), the interaction mediates transcriptional repression activity.

It is found in the nucleus. The protein resides in the nucleolus. The protein localises to the chromosome. Its subcellular location is the centromere. It localises to the kinetochore. In terms of biological role, transcriptional regulator that associates with ribosomal RNA promoters and suppresses ribosomal RNA (rRNA) transcription. This is PHD finger protein 6 (PHF6) from Bos taurus (Bovine).